The primary structure comprises 441 residues: Growth/differentiation factor 9 (441 aa).

Positions 1 to 29 are cleaved as a signal peptide; it reads MALPSNFLLGVCCFAWLCFLSSLSSQAST. Residues 30 to 306 constitute a propeptide that is removed on maturation; it reads EESQSGASEN…EVERSPRRRR (277 aa). N-linked (GlcNAc...) asparagine glycans are attached at residues asparagine 163, asparagine 229, asparagine 258, and asparagine 325. 3 disulfides stabilise this stretch: cysteine 340/cysteine 406, cysteine 369/cysteine 438, and cysteine 373/cysteine 440.

It belongs to the TGF-beta family. In terms of assembly, homodimer or heterodimer (Potential). But, in contrast to other members of this family, cannot be disulfide-linked. Post-translationally, phosphorylated; phosphorylation is critical for GDF9 function. In terms of tissue distribution, ovary. Strongly expressed in germinal vesicle (GV) stage oocytes, MII-stage oocytes and in zygotes.

The protein resides in the secreted. In terms of biological role, required for ovarian folliculogenesis. This Mus musculus (Mouse) protein is Growth/differentiation factor 9 (Gdf9).